A 468-amino-acid chain; its full sequence is Cysteine--tRNA ligase (468 aa).

C28 is a Zn(2+) binding site. The 'HIGH' region motif lies at 30–40 (PTVYNYIHIGN). Zn(2+) is bound by residues C212, H237, and E241. A 'KMSKS' region motif is present at residues 271–275 (KMSKS). K274 is a binding site for ATP.

It belongs to the class-I aminoacyl-tRNA synthetase family. In terms of assembly, monomer. Requires Zn(2+) as cofactor.

It is found in the cytoplasm. The enzyme catalyses tRNA(Cys) + L-cysteine + ATP = L-cysteinyl-tRNA(Cys) + AMP + diphosphate. This chain is Cysteine--tRNA ligase, found in Lacticaseibacillus casei (strain BL23) (Lactobacillus casei).